A 180-amino-acid polypeptide reads, in one-letter code: Riboflavin kinase (180 aa).

Residues Thr40 and Asn42 each coordinate Mg(2+). The active-site Nucleophile is Glu117.

It belongs to the flavokinase family. Zn(2+) serves as cofactor. Requires Mg(2+) as cofactor.

It carries out the reaction riboflavin + ATP = FMN + ADP + H(+). Its pathway is cofactor biosynthesis; FMN biosynthesis; FMN from riboflavin (ATP route): step 1/1. Functionally, catalyzes the phosphorylation of riboflavin (vitamin B2) to form flavin mononucleotide (FMN) coenzyme. The polypeptide is Riboflavin kinase (FMN1) (Meyerozyma guilliermondii (strain ATCC 6260 / CBS 566 / DSM 6381 / JCM 1539 / NBRC 10279 / NRRL Y-324) (Yeast)).